The primary structure comprises 435 residues: FAD-dependent monooxygenase ATEG_07662 (435 aa).

A helical transmembrane segment spans residues 8 to 28; the sequence is PLDVAIIGGGIIGIMTALGLL. FAD-binding residues include Glu38, Ala51, and Arg119. Asn191 carries an N-linked (GlcNAc...) asparagine glycan. The active site involves Arg201. Residues Asp317 and Ala330 each contribute to the FAD site.

This sequence belongs to the paxM FAD-dependent monooxygenase family. It depends on FAD as a cofactor.

The protein resides in the membrane. Its pathway is secondary metabolite biosynthesis. Functionally, FAD-dependent monooxygenase; part of the cluster B that mediates the biosynthesis of azasperpyranones, members of the azaphilone family that exhibit anti-cancer activities. Azasperpyranones are synthesized by 2 clusters, A and B. Cluster A is responsible for the production of the polyhydric phenol moiety while the azaphilonoid scaffold is produced by the cluster B. The non-reducing polyketide synthase ATEG_03629 produces 5-methyl orsellinic acid, which is then reduced to 5-methyl orsellinic aldehyde by the NRPS-like protein ATEG_03630. 5-methyl orsellinic aldehyde is then first hydroxylated by the FAD-dependent monooxygenase ATEG_03635 and subsequently hydroxylated by the cytochrome P450 monooxygenase ATEG_03631 to produce the unstable polyhydric phenol precursor of azasperpyranones. On the other hand, the polyketide synthase ATEG_07659 is responsible for producing the 3,5-dimethyloctadienone moiety from acetyl-CoA, three malonyl-CoA, and two S-adenosyl methionines (SAM). The 3,5-dimethyloctadienone moiety is then loaded onto the SAT domain of ATEG_07661 and extended with four malonyl-CoA and one SAM, which leads to the formation of 2,4-dihydroxy-6-(5,7-dimethyl-2-oxo-trans-3-trans-5-nonadienyl)-3-methylbenzaldehyde (compound 8) after reductive release and aldol condensation. The FAD-dependent monooxygenase ATEG_07662 is the next enzyme in the biosynthesis sequence and hydroxylates the side chain at the benzylic position of compound 8. In Aspergillus nidulans, afoF, the ortholog of the FAD-dependent oxygenase ATEG_07660, is the key enzyme for the biosynthesis of asperfuranone by catalyzing the hydroxylation at C-8 of to prevent the formation of a six-membered ring hemiacetal intermediate and thus facilitating the formation of a five-membered ring to produce asperfuranone. In Aspergillus terreus, ATEG_07660 is probably not functional, which leads to the formation of the six-membered ring hemiacetal intermediate presperpyranone instead of asperfuranone. Finally, ATEG_03636 is involved in the condensation of the polyhydric phenol moiety produced by cluster A and the perasperpyranone precursor produced by cluster B, to yield azasperpyranone A. Further modifications of azasperpyranone A result in the production of derivatives, including azasperpyranone B to F. This chain is FAD-dependent monooxygenase ATEG_07662, found in Aspergillus terreus (strain NIH 2624 / FGSC A1156).